Reading from the N-terminus, the 306-residue chain is Ornithine carbamoyltransferase, anabolic (306 aa).

Residues 46–49, glutamine 73, arginine 97, and 124–127 each bind carbamoyl phosphate; these read STRT and HPTQ. Residues asparagine 156, aspartate 220, and 224–225 each bind L-ornithine; that span reads SM. Residues 260–261 and arginine 288 each bind carbamoyl phosphate; that span reads CL.

It belongs to the aspartate/ornithine carbamoyltransferase superfamily. OTCase family. Homohexamer; dimer of trimers.

It localises to the cytoplasm. The enzyme catalyses carbamoyl phosphate + L-ornithine = L-citrulline + phosphate + H(+). It functions in the pathway amino-acid biosynthesis; L-arginine biosynthesis; L-arginine from L-ornithine and carbamoyl phosphate: step 1/3. Functionally, reversibly catalyzes the transfer of the carbamoyl group from carbamoyl phosphate (CP) to the N(epsilon) atom of ornithine (ORN) to produce L-citrulline, which is a substrate for argininosuccinate synthetase (ArgG) involved in the final step in arginine biosynthesis. This Campylobacter jejuni subsp. jejuni serotype O:2 (strain ATCC 700819 / NCTC 11168) protein is Ornithine carbamoyltransferase, anabolic.